Reading from the N-terminus, the 43-residue chain is Large ribosomal subunit protein bL32 (43 aa).

It belongs to the bacterial ribosomal protein bL32 family.

The sequence is that of Large ribosomal subunit protein bL32 (rpmF) from Carsonella ruddii (strain PV).